The primary structure comprises 228 residues: Ribulose-phosphate 3-epimerase (228 aa).

Ser-9 lines the substrate pocket. A divalent metal cation contacts are provided by His-34, Asp-36, His-68, and Asp-177. Asp-36 acts as the Proton acceptor in catalysis. Residues His-68, 177–179 (DGG), and 199–200 (GS) contribute to the substrate site. Asp-177 (proton donor) is an active-site residue.

This sequence belongs to the ribulose-phosphate 3-epimerase family. A divalent metal cation serves as cofactor.

The catalysed reaction is D-ribulose 5-phosphate = D-xylulose 5-phosphate. It functions in the pathway carbohydrate degradation. In terms of biological role, catalyzes the reversible epimerization of D-ribulose 5-phosphate to D-xylulose 5-phosphate. The chain is Ribulose-phosphate 3-epimerase from Buchnera aphidicola subsp. Acyrthosiphon pisum (strain APS) (Acyrthosiphon pisum symbiotic bacterium).